The primary structure comprises 328 residues: Alanine racemase (328 aa).

Lys33 acts as the Proton acceptor; specific for D-alanine in catalysis. N6-(pyridoxal phosphate)lysine is present on Lys33. Arg118 is a substrate binding site. Tyr237 acts as the Proton acceptor; specific for L-alanine in catalysis. Met283 serves as a coordination point for substrate.

The protein belongs to the alanine racemase family. It depends on pyridoxal 5'-phosphate as a cofactor.

It catalyses the reaction L-alanine = D-alanine. It functions in the pathway amino-acid biosynthesis; D-alanine biosynthesis; D-alanine from L-alanine: step 1/1. Catalyzes the interconversion of L-alanine and D-alanine. May also act on other amino acids. The polypeptide is Alanine racemase (alr) (Campylobacter jejuni subsp. doylei (strain ATCC BAA-1458 / RM4099 / 269.97)).